Here is a 563-residue protein sequence, read N- to C-terminus: Membrane protein insertase YidC (563 aa).

Residues 1-21 (MDIKRTILIVALAIVTYVGVL) form a helical membrane-spanning segment. A disordered region spans residues 43–62 (APGIPDTAAGTNGSASADVP). The next 5 helical transmembrane spans lie at 344 to 364 (LELTVDYGFLWFIAQPIFWLL), 370 to 390 (ILGNWGWSIIVLTMLIKGLFF), 440 to 460 (LGGCLPILVQMPVFLSLYWVL), 471 to 491 (WILWITDLSIKDPFFILPIIM), and 518 to 538 (PIIFTFFFLWFPAGLVLYWVV).

The protein belongs to the OXA1/ALB3/YidC family. Type 1 subfamily. In terms of assembly, interacts with the Sec translocase complex via SecD. Specifically interacts with transmembrane segments of nascent integral membrane proteins during membrane integration.

It localises to the cell inner membrane. Required for the insertion and/or proper folding and/or complex formation of integral membrane proteins into the membrane. Involved in integration of membrane proteins that insert both dependently and independently of the Sec translocase complex, as well as at least some lipoproteins. Aids folding of multispanning membrane proteins. This chain is Membrane protein insertase YidC, found in Pseudomonas syringae pv. syringae (strain B728a).